The following is a 384-amino-acid chain: MTKPIITFNNVSKTFEDSGTQVLKNINFDLEEGKFYTLLGASGSGKSTILNIMAGLLDASSGDIYLDGERINDLPINKRDIHTVFQNYALFPHMTVFENVAFALKLKKVDKKEIAKRVKETLKMVQLEGYENRSIQKLSGGQRQRVAIARAIINQPRVVLLDEPLSALDLKLRTEMQYELRELQQRLGITFVFVTHDQEEALAMSDWIFVMNEGEIVQSGTPVDIYDEPINHFVANFIGESNIINGTMIEDYLVSFNGKEFESVDGGMRPNEPVEVVIRPEDLQITLPEEGKLQVKVDTQLFRGVHYEIIAYDELGNEWMIHSTRKAIEGEVIGLDFTPEDLHIMRLNETEEEFDARIEEYVEMDEPEDGLINAIEEERNEENL.

The 233-residue stretch at 6 to 238 (ITFNNVSKTF…PINHFVANFI (233 aa)) folds into the ABC transporter domain. 40–47 (GASGSGKS) is a binding site for ATP.

It belongs to the ABC transporter superfamily. Spermidine/putrescine importer (TC 3.A.1.11.1) family. The complex is composed of two ATP-binding proteins (PotA), two transmembrane proteins (PotB and PotC) and a solute-binding protein (PotD).

It is found in the cell membrane. It carries out the reaction ATP + H2O + polyamine-[polyamine-binding protein]Side 1 = ADP + phosphate + polyamineSide 2 + [polyamine-binding protein]Side 1.. Its function is as follows. Part of the ABC transporter complex PotABCD involved in spermidine/putrescine import. Responsible for energy coupling to the transport system. In Streptococcus pyogenes serotype M12 (strain MGAS2096), this protein is Spermidine/putrescine import ATP-binding protein PotA.